A 201-amino-acid polypeptide reads, in one-letter code: Small ribosomal subunit protein uS4c (201 aa).

A disordered region spans residues 16 to 37 (GALPGLTSKRPRSGSDLRNQSR). An S4 RNA-binding domain is found at 89 to 152 (MRLDNTLFRL…RSRTLIQNHI (64 aa)).

This sequence belongs to the universal ribosomal protein uS4 family. As to quaternary structure, part of the 30S ribosomal subunit. Contacts protein S5. The interaction surface between S4 and S5 is involved in control of translational fidelity.

The protein localises to the plastid. It localises to the chloroplast. Its function is as follows. One of the primary rRNA binding proteins, it binds directly to 16S rRNA where it nucleates assembly of the body of the 30S subunit. Functionally, with S5 and S12 plays an important role in translational accuracy. This is Small ribosomal subunit protein uS4c (rps4) from Chloranthus spicatus (Chulantree).